The primary structure comprises 140 residues: Small ribosomal subunit protein uS19 (140 aa).

This sequence belongs to the universal ribosomal protein uS19 family.

Its function is as follows. Protein S19 forms a complex with S13 that binds strongly to the 16S ribosomal RNA. This chain is Small ribosomal subunit protein uS19 (rps19), found in Sulfurisphaera tokodaii (strain DSM 16993 / JCM 10545 / NBRC 100140 / 7) (Sulfolobus tokodaii).